A 328-amino-acid chain; its full sequence is 17-beta-hydroxysteroid dehydrogenase type 1 (328 aa).

NADP(+) is bound by residues 10–38 and aspartate 66; that span reads GCSS…ATLR. The residue at position 135 (serine 135) is a Phosphoserine; by PKA. Residue serine 143 coordinates substrate. Catalysis depends on tyrosine 156, which acts as the Proton acceptor. An NADP(+)-binding site is contributed by lysine 160. The tract at residues 291–328 is disordered; sequence KAEAGAEAGGGAGPGAEDEAGRGAVGDPELGDPPAAPQ.

It belongs to the short-chain dehydrogenases/reductases (SDR) family. As to quaternary structure, homodimer. Exists predominantly as a homodimer but also exits as monomer.

It localises to the cytoplasm. It carries out the reaction 17beta-estradiol + NAD(+) = estrone + NADH + H(+). The enzyme catalyses 17beta-estradiol + NADP(+) = estrone + NADPH + H(+). It catalyses the reaction testosterone + NADP(+) = androst-4-ene-3,17-dione + NADPH + H(+). It functions in the pathway steroid biosynthesis; estrogen biosynthesis. In terms of biological role, favors the reduction of estrogens and androgens. Converts estrone (E1) to a more potent estrogen, 17beta-estradiol (E2). Also has 20-alpha-HSD activity. Uses preferentially NADH. The protein is 17-beta-hydroxysteroid dehydrogenase type 1 of Homo sapiens (Human).